The primary structure comprises 221 residues: Transmembrane emp24 domain-containing protein 3 (221 aa).

Residues 1–25 form the signal peptide; that stretch reads MVHEAPHASSFQMLLQLLLLLLLRA. Over 28–184 the chain is Lumenal; that stretch reads LRSAELTFEL…RAEDLNSRVS (157 aa). The region spanning 42–124 is the GOLD domain; it reads KQCFHEEVEQ…HKTVYFDFQV (83 aa). Arg103 is modified (dimethylated arginine). A helical transmembrane segment spans residues 185-205; the sequence is YWSVGETIALFVVSFSQVLLL. Topologically, residues 206-221 are cytoplasmic; the sequence is KSFFTEKRPVNRAVHS. A COPII vesicle coat-binding motif is present at residues 208–209; the sequence is FF. The COPI vesicle coat-binding signature appears at 208 to 221; that stretch reads FFTEKRPVNRAVHS.

This sequence belongs to the EMP24/GP25L family. As to quaternary structure, monomer in endoplasmic reticulum, endoplasmic reticulum-Golgi intermediate compartment and cis-Golgi network. Interacts (via C-terminus) with COPG1; the interaction involves dimeric TMED3; however, there are conflicting reports on the interaction. Interacts with GORASP1 and GORASP2.

The protein resides in the endoplasmic reticulum-Golgi intermediate compartment membrane. It is found in the golgi apparatus. The protein localises to the cis-Golgi network membrane. Its subcellular location is the golgi stack membrane. It localises to the endoplasmic reticulum membrane. The protein resides in the cytoplasmic vesicle. It is found in the COPI-coated vesicle membrane. Potential role in vesicular protein trafficking, mainly in the early secretory pathway. Contributes to the coupled localization of TMED2 and TMED10 in the cis-Golgi network. This is Transmembrane emp24 domain-containing protein 3 (Tmed3) from Mus musculus (Mouse).